Here is a 144-residue protein sequence, read N- to C-terminus: Gas vesicle protein I1 (144 aa).

The disordered stretch occupies residues 1–144; sequence MSDKQQQKHK…SPTEDEVNDE (144 aa). Composition is skewed to basic residues over residues 7–17 and 26–46; these read QKHKQKARQAR and KARR…TRNR. The span at 75-94 shows a compositional bias: polar residues; the sequence is MPPQKSNAENAVRNSHSTVP. The segment covering 122 to 136 has biased composition (low complexity); the sequence is SEASAPSDESASGSP.

Belongs to the gas vesicle GvpI family. GvpF to GvpM interact with each other in vitro, and may form multi-subunit complex(es). Interacts with GvpC1 and GvpO.

The protein localises to the gas vesicle. Proteins GvpF to GvpM might be involved in nucleating gas vesicle formation. A minor component of the gas vesicle. Gas vesicles are hollow, gas filled proteinaceous nanostructures found in several microbial planktonic microorganisms. They allow positioning of halobacteria at the optimal depth for growth in the poorly aerated, shallow brine pools of their habitat. Functionally, expression of a 9.5 kb p-vac DNA fragment containing 2 divergently transcribed regions (gvpD-gvpE-gvpF-gvpG-gvpH-gvpI-gvpJ-gvpK-gvpL-gvpM and gvpA-gvpC-gvpN-gvpO) allows H.volcanii to produce gas vesicles. A similar region restores gas vesicle production in H.halobium without the p-vac locus, but it still has the c-vac locus. This Halobacterium salinarum (strain ATCC 700922 / JCM 11081 / NRC-1) (Halobacterium halobium) protein is Gas vesicle protein I1 (gvpI11).